Here is a 259-residue protein sequence, read N- to C-terminus: Phosphate import ATP-binding protein PstB (259 aa).

In terms of domain architecture, ABC transporter spans 13 to 254 (IAVKNLNFFY…PTRKETEDYI (242 aa)). 45-52 (GPSGCGKS) lines the ATP pocket.

This sequence belongs to the ABC transporter superfamily. Phosphate importer (TC 3.A.1.7) family. The complex is composed of two ATP-binding proteins (PstB), two transmembrane proteins (PstC and PstA) and a solute-binding protein (PstS).

The protein resides in the cell inner membrane. It carries out the reaction phosphate(out) + ATP + H2O = ADP + 2 phosphate(in) + H(+). Functionally, part of the ABC transporter complex PstSACB involved in phosphate import. Responsible for energy coupling to the transport system. The polypeptide is Phosphate import ATP-binding protein PstB (Albidiferax ferrireducens (strain ATCC BAA-621 / DSM 15236 / T118) (Rhodoferax ferrireducens)).